The chain runs to 755 residues: Protein phosphatase 1E (755 aa).

The disordered stretch occupies residues 21–131 (EFRGPCGGGE…PPLPPLPRPL (111 aa)). Repeat copies occupy residues 31 to 32 (PE), 33 to 34 (PE), 35 to 36 (PE), 37 to 38 (PE), 39 to 40 (PE), 41 to 42 (PE), and 43 to 44 (PE). The segment at 31-52 (PEPEPEPEPEPEPESEPEPEPE) is 11 X 2 AA tandem repeats of P-E. 2 stretches are compositionally biased toward acidic residues: residues 31–68 (PEPE…EPGE) and 77–101 (EEGD…EEEG). Residues 45-46 (SE) form an 8; approximate repeat. 3 tandem repeats follow at residues 47–48 (PE), 49–50 (PE), and 51–52 (PE). Over residues 102 to 113 (AATAAAAPGHSA) the composition is skewed to low complexity. The span at 114-129 (VPPPPPQLPPLPPLPR) shows a compositional bias: pro residues. A PPM-type phosphatase domain is found at 231 to 488 (ETSIHAIKNM…DNITVIVVFL (258 aa)). Mn(2+) contacts are provided by Asp-273, Gly-274, Asp-435, and Asp-479. Residues 498–537 (SEESDWTENSFQGGQEDGGDDKENHGECKRPWPQHQCSAP) form a disordered region. Basic and acidic residues predominate over residues 518 to 527 (DKENHGECKR). Phosphoserine is present on residues Ser-535 and Ser-548.

It belongs to the PP2C family. As to quaternary structure, heterotrimer. Interacts with PAX1 and ARHGEF6 (or ARHGEF7). Mg(2+) is required as a cofactor. The cofactor is Mn(2+).

The protein localises to the nucleus. It localises to the cytoplasm. The catalysed reaction is O-phospho-L-seryl-[protein] + H2O = L-seryl-[protein] + phosphate. It catalyses the reaction O-phospho-L-threonyl-[protein] + H2O = L-threonyl-[protein] + phosphate. Functionally, protein phosphatase that inactivates multifunctional CaM kinases such as CAMK4 and CAMK2. Dephosphorylates and inactivates PAK. May play a role in the inhibition of actin fiber stress breakdown and in morphological changes driven by TNK2/CDC42. Dephosphorylates PRKAA2. The chain is Protein phosphatase 1E (PPM1E) from Homo sapiens (Human).